Reading from the N-terminus, the 98-residue chain is DNA-binding protein Fis (98 aa).

Residues 74-93 (QTRAATMMGINRGTLRKKLK) constitute a DNA-binding region (H-T-H motif).

The protein belongs to the transcriptional regulatory Fis family. In terms of assembly, homodimer.

Its function is as follows. Activates ribosomal RNA transcription. Plays a direct role in upstream activation of rRNA promoters. This Vibrio parahaemolyticus serotype O3:K6 (strain RIMD 2210633) protein is DNA-binding protein Fis.